Reading from the N-terminus, the 277-residue chain is Alpha carbonic anhydrase 3 (277 aa).

A signal peptide spans 1 to 19 (MKTIILFVTFLALSSSSLA). Residues 24 to 259 (TEFHYKPGEI…LNGRLVYLNE (236 aa)) enclose the Alpha-carbonic anhydrase domain. A disulfide bond links C49 and C209. 2 N-linked (GlcNAc...) asparagine glycosylation sites follow: N70 and N107. Zn(2+) contacts are provided by H117, H119, and H136. 205 to 206 (TT) lines the substrate pocket. The disordered stretch occupies residues 257 to 277 (LNEQSSPSPTPRLRIPRVGPV).

Belongs to the alpha-class carbonic anhydrase family. Requires Zn(2+) as cofactor. Post-translationally, N-glycosylated. In terms of tissue distribution, expressed in flowers and siliques.

It localises to the plastid. The protein resides in the chloroplast stroma. It catalyses the reaction hydrogencarbonate + H(+) = CO2 + H2O. In terms of biological role, reversible hydration of carbon dioxide. In Arabidopsis thaliana (Mouse-ear cress), this protein is Alpha carbonic anhydrase 3 (ACA3).